Here is a 355-residue protein sequence, read N- to C-terminus: Probable dual-specificity RNA methyltransferase RlmN (355 aa).

Glutamate 107 functions as the Proton acceptor in the catalytic mechanism. A Radical SAM core domain is found at 113–341 (TDKRLTVCVS…VSVRYSRGLE (229 aa)). The cysteines at positions 120 and 346 are disulfide-linked. 3 residues coordinate [4Fe-4S] cluster: cysteine 127, cysteine 131, and cysteine 134. S-adenosyl-L-methionine contacts are provided by residues 174–175 (GE), serine 204, 227–229 (SLH), and asparagine 303. Catalysis depends on cysteine 346, which acts as the S-methylcysteine intermediate.

This sequence belongs to the radical SAM superfamily. RlmN family. [4Fe-4S] cluster serves as cofactor.

It is found in the cytoplasm. The enzyme catalyses adenosine(2503) in 23S rRNA + 2 reduced [2Fe-2S]-[ferredoxin] + 2 S-adenosyl-L-methionine = 2-methyladenosine(2503) in 23S rRNA + 5'-deoxyadenosine + L-methionine + 2 oxidized [2Fe-2S]-[ferredoxin] + S-adenosyl-L-homocysteine. It carries out the reaction adenosine(37) in tRNA + 2 reduced [2Fe-2S]-[ferredoxin] + 2 S-adenosyl-L-methionine = 2-methyladenosine(37) in tRNA + 5'-deoxyadenosine + L-methionine + 2 oxidized [2Fe-2S]-[ferredoxin] + S-adenosyl-L-homocysteine. Functionally, specifically methylates position 2 of adenine 2503 in 23S rRNA and position 2 of adenine 37 in tRNAs. This is Probable dual-specificity RNA methyltransferase RlmN from Trichormus variabilis (strain ATCC 29413 / PCC 7937) (Anabaena variabilis).